Consider the following 705-residue polypeptide: Ion-translocating oxidoreductase complex subunit C (705 aa).

2 consecutive 4Fe-4S ferredoxin-type domains span residues 368 to 397 (MGET…QQLY) and 407 to 435 (KATA…LVQY). Cysteine 377, cysteine 380, cysteine 383, cysteine 387, cysteine 416, cysteine 419, cysteine 422, and cysteine 426 together coordinate [4Fe-4S] cluster. Residues 536 to 684 (RARQAENIPA…EPVDPRKAAV (149 aa)) form a disordered region.

It belongs to the 4Fe4S bacterial-type ferredoxin family. RnfC subfamily. The complex is composed of six subunits: RnfA, RnfB, RnfC, RnfD, RnfE and RnfG. It depends on [4Fe-4S] cluster as a cofactor.

Its subcellular location is the cell inner membrane. Its function is as follows. Part of a membrane-bound complex that couples electron transfer with translocation of ions across the membrane. This chain is Ion-translocating oxidoreductase complex subunit C, found in Citrobacter koseri (strain ATCC BAA-895 / CDC 4225-83 / SGSC4696).